A 973-amino-acid polypeptide reads, in one-letter code: UvrABC system protein A (973 aa).

An ATP-binding site is contributed by Gly-34–Ser-41. 2 consecutive ABC transporter domains span residues Trp-330 to Ile-609 and Ala-629 to Lys-958. Gly-662–Ser-669 contributes to the ATP binding site. Residues Cys-761–Cys-787 form a C4-type zinc finger.

This sequence belongs to the ABC transporter superfamily. UvrA family. In terms of assembly, forms a heterotetramer with UvrB during the search for lesions.

The protein localises to the cytoplasm. The UvrABC repair system catalyzes the recognition and processing of DNA lesions. UvrA is an ATPase and a DNA-binding protein. A damage recognition complex composed of 2 UvrA and 2 UvrB subunits scans DNA for abnormalities. When the presence of a lesion has been verified by UvrB, the UvrA molecules dissociate. This Mesorhizobium japonicum (strain LMG 29417 / CECT 9101 / MAFF 303099) (Mesorhizobium loti (strain MAFF 303099)) protein is UvrABC system protein A.